The primary structure comprises 332 residues: Anthranilate phosphoribosyltransferase (332 aa).

5-phospho-alpha-D-ribose 1-diphosphate is bound by residues glycine 79, 82–83, threonine 87, 89–92, 107–115, and serine 119; these read GD, NIST, and KHGNRSVSS. Glycine 79 contacts anthranilate. Serine 91 serves as a coordination point for Mg(2+). Asparagine 110 is a binding site for anthranilate. Arginine 165 is a binding site for anthranilate. Mg(2+)-binding residues include aspartate 223 and glutamate 224.

Belongs to the anthranilate phosphoribosyltransferase family. Homodimer. Mg(2+) serves as cofactor.

It carries out the reaction N-(5-phospho-beta-D-ribosyl)anthranilate + diphosphate = 5-phospho-alpha-D-ribose 1-diphosphate + anthranilate. It participates in amino-acid biosynthesis; L-tryptophan biosynthesis; L-tryptophan from chorismate: step 2/5. Its function is as follows. Catalyzes the transfer of the phosphoribosyl group of 5-phosphorylribose-1-pyrophosphate (PRPP) to anthranilate to yield N-(5'-phosphoribosyl)-anthranilate (PRA). In Vibrio vulnificus (strain CMCP6), this protein is Anthranilate phosphoribosyltransferase.